The chain runs to 280 residues: MNDQTFMKLMQVLPKSALSTVVGMATRLPVPAPVHQAAMRAFAKAYNVDMEEAEHSFEHYPTFAQFFTRGLKPGLRPVDAGEKVVVSPVDGRVSQVGYSDYGRCLQAKGIEYTVDELLGDSEAAKPFYGGAWTTIYLSPRDYHRIHAPLGGTITGYAYIPGEFWPVNPASVKNKQSLFCVNERLVTYLDTVAGKCAVVKVGATCVSRIKAAYDEVTTHTGQPGKVHRYGSAMPVEKGGELGRFEMGSTVILLFEPKRVTWDDSLQEEAVVRLGKRIGVIT.

Active-site charge relay system; for autoendoproteolytic cleavage activity residues include aspartate 90, histidine 146, and serine 247. Residue serine 247 is the Schiff-base intermediate with substrate; via pyruvic acid; for decarboxylase activity of the active site. Residue serine 247 is modified to Pyruvic acid (Ser); by autocatalysis.

Belongs to the phosphatidylserine decarboxylase family. PSD-B subfamily. Prokaryotic type I sub-subfamily. In terms of assembly, heterodimer of a large membrane-associated beta subunit and a small pyruvoyl-containing alpha subunit. The cofactor is pyruvate. In terms of processing, is synthesized initially as an inactive proenzyme. Formation of the active enzyme involves a self-maturation process in which the active site pyruvoyl group is generated from an internal serine residue via an autocatalytic post-translational modification. Two non-identical subunits are generated from the proenzyme in this reaction, and the pyruvate is formed at the N-terminus of the alpha chain, which is derived from the carboxyl end of the proenzyme. The autoendoproteolytic cleavage occurs by a canonical serine protease mechanism, in which the side chain hydroxyl group of the serine supplies its oxygen atom to form the C-terminus of the beta chain, while the remainder of the serine residue undergoes an oxidative deamination to produce ammonia and the pyruvoyl prosthetic group on the alpha chain. During this reaction, the Ser that is part of the protease active site of the proenzyme becomes the pyruvoyl prosthetic group, which constitutes an essential element of the active site of the mature decarboxylase.

It is found in the cell membrane. The enzyme catalyses a 1,2-diacyl-sn-glycero-3-phospho-L-serine + H(+) = a 1,2-diacyl-sn-glycero-3-phosphoethanolamine + CO2. It functions in the pathway phospholipid metabolism; phosphatidylethanolamine biosynthesis; phosphatidylethanolamine from CDP-diacylglycerol: step 2/2. In terms of biological role, catalyzes the formation of phosphatidylethanolamine (PtdEtn) from phosphatidylserine (PtdSer). The polypeptide is Phosphatidylserine decarboxylase proenzyme (Myxococcus xanthus (strain DK1622)).